The following is a 64-amino-acid chain: Large ribosomal subunit protein bL35 (64 aa).

The protein belongs to the bacterial ribosomal protein bL35 family.

The sequence is that of Large ribosomal subunit protein bL35 from Alcanivorax borkumensis (strain ATCC 700651 / DSM 11573 / NCIMB 13689 / SK2).